The chain runs to 90 residues: MKTAIFTVVLALAVFAVLSFGWEANEKALSEEFTELIHEKEAASETEARGCRYFWGECHDHMPCCDWLVCRYKWPITYNICVWNRTFPEK.

The signal sequence occupies residues 1–19 (MKTAIFTVVLALAVFAVLS). Positions 20–50 (FGWEANEKALSEEFTELIHEKEAASETEARG) are excised as a propeptide. Intrachain disulfides connect Cys-51/Cys-65, Cys-58/Cys-70, and Cys-64/Cys-81.

This sequence belongs to the neurotoxin 10 (Hwtx-1) family. 13 (Hntx-13) subfamily. In terms of tissue distribution, expressed by the venom gland.

It localises to the secreted. Functionally, ion channel inhibitor. In Cyriopagopus hainanus (Chinese bird spider), this protein is U7-theraphotoxin-Hhn1f.